The primary structure comprises 105 residues: uncharacterized protein (105 aa).

Residues 31–47 (SVNLPSPSVKPSVTPSV) are compositionally biased toward low complexity. Residues 31 to 80 (SVNLPSPSVKPSVTPSVKKPPHVIRSDYSKPREKPAKVAKKPTVKNDKKP) are disordered. A compositionally biased stretch (basic and acidic residues) spans 54–66 (IRSDYSKPREKPA).

This is an uncharacterized protein from Caenorhabditis elegans.